Here is an 862-residue protein sequence, read N- to C-terminus: DNA replication licensing factor MCM4 (862 aa).

Positions 1–10 (MSSPASTPSR) are enriched in low complexity. Disordered stretches follow at residues 1-71 (MSSP…FSSP) and 90-121 (TYGTPSSRVEGTPRSGVRGTPVRQRPDLGSAR). The residue at position 2 (Ser2) is an N-acetylserine. Ser6 carries the phosphoserine modification. 2 positions are modified to phosphothreonine: Thr7 and Thr19. A phosphoserine mark is found at Ser26, Ser31, and Ser32. Residues 61-71 (PPAQNALFSSP) show a composition bias toward polar residues. Thr101 is subject to Phosphothreonine. Ser104 carries the post-translational modification Phosphoserine. Position 109 is a phosphothreonine (Thr109). 4 positions are modified to phosphoserine: Ser119, Ser130, Ser141, and Ser144. Lys219 bears the N6-acetyllysine mark. Lys438 is covalently cross-linked (Glycyl lysine isopeptide (Lys-Gly) (interchain with G-Cter in SUMO2)). Lys449 is modified (N6-acetyllysine). The region spanning 457–666 (IYERLASALA…YDRRLAHHLV (210 aa)) is the MCM domain. ATP is bound by residues Tyr470, Arg496, Lys515, Ser516, Asn617, Arg642, Arg731, and Glu734. The Arginine finger motif lies at 641-644 (SRFD). A Glycyl lysine isopeptide (Lys-Gly) (interchain with G-Cter in SUMO2) cross-link involves residue Lys797. The residue at position 857 (Lys857) is an N6-acetyllysine.

It belongs to the MCM family. As to quaternary structure, component of the MCM2-7 complex. The complex forms a toroidal hexameric ring with the proposed subunit order MCM2-MCM6-MCM4-MCM7-MCM3-MCM5. Component of the CMG helicase complex, a hexameric ring of related MCM2-7 subunits stabilized by CDC45 and the tetrameric GINS complex. Interacts with MCMBP. In terms of processing, sumoylated; SUMO2 modified in response to stress caused by inhibition of proteasome activity (in vitro).

The protein resides in the nucleus. It localises to the chromosome. The catalysed reaction is ATP + H2O = ADP + phosphate + H(+). Functionally, acts as a component of the MCM2-7 complex (MCM complex) which is the replicative helicase essential for 'once per cell cycle' DNA replication initiation and elongation in eukaryotic cells. Core component of CDC45-MCM-GINS (CMG) helicase, the molecular machine that unwinds template DNA during replication, and around which the replisome is built. The active ATPase sites in the MCM2-7 ring are formed through the interaction surfaces of two neighboring subunits such that a critical structure of a conserved arginine finger motif is provided in trans relative to the ATP-binding site of the Walker A box of the adjacent subunit. The six ATPase active sites, however, are likely to contribute differentially to the complex helicase activity. This is DNA replication licensing factor MCM4 (Mcm4) from Mus musculus (Mouse).